The chain runs to 415 residues: Dynein assembly factor with WD repeat domains 1 (415 aa).

8 WD repeats span residues 90 to 129 (AHIL…ELHT), 132 to 174 (GHRN…HTFR), 175 to 214 (GHTA…EVVT), 217 to 256 (GHLA…KVHT), 259 to 298 (GHCA…CVAT), 301 to 340 (GHDD…CITK), 343 to 384 (GHEG…QVLE), and 386 to 415 (HTDE…RIWR).

It belongs to the WD repeat WDR69 family. As to quaternary structure, interacts with IFT46.

The protein resides in the cytoplasm. Its subcellular location is the cytoskeleton. It is found in the flagellum basal body. The protein localises to the flagellum axoneme. In terms of biological role, required for axonemal dynein assembly and ciliary motility in ciliated organs, including Kupffer's vesicle, during embryogenesis. Facilitates the onset of robust cilia motility during development. This is Dynein assembly factor with WD repeat domains 1 (Daw1) from Rattus norvegicus (Rat).